The chain runs to 100 residues: Small ribosomal subunit protein uS14c (100 aa).

It belongs to the universal ribosomal protein uS14 family. As to quaternary structure, part of the 30S ribosomal subunit.

It is found in the plastid. It localises to the chloroplast. In terms of biological role, binds 16S rRNA, required for the assembly of 30S particles. The chain is Small ribosomal subunit protein uS14c from Capsella bursa-pastoris (Shepherd's purse).